The following is a 438-amino-acid chain: 23S rRNA (uracil(1939)-C(5))-methyltransferase RlmD (438 aa).

The region spanning 10-69 (KASVNTKHQSVDVVRLDHNGAGIAFVDKKPVFIEGALPGEKAIIQFIEQKKQFSRAKLIK) is the TRAM domain. Residues Cys-82, Cys-88, Cys-91, and Cys-169 each coordinate [4Fe-4S] cluster. 6 residues coordinate S-adenosyl-L-methionine: Gln-272, Phe-301, Asn-306, Glu-322, Asn-349, and Asp-370. Residue Cys-396 is the Nucleophile of the active site.

The protein belongs to the class I-like SAM-binding methyltransferase superfamily. RNA M5U methyltransferase family. RlmD subfamily.

The catalysed reaction is uridine(1939) in 23S rRNA + S-adenosyl-L-methionine = 5-methyluridine(1939) in 23S rRNA + S-adenosyl-L-homocysteine + H(+). Its function is as follows. Catalyzes the formation of 5-methyl-uridine at position 1939 (m5U1939) in 23S rRNA. This Aliivibrio fischeri (strain ATCC 700601 / ES114) (Vibrio fischeri) protein is 23S rRNA (uracil(1939)-C(5))-methyltransferase RlmD.